The chain runs to 264 residues: Enhancer of mRNA-decapping protein 1 (264 aa).

Disordered stretches follow at residues 1 to 180 and 193 to 264; these read MLAQ…FSTI and YNNP…LRDY. Residues 63-74 show a composition bias toward basic residues; it reads GKKSTSKPKSKS. Polar residues predominate over residues 83–92; it reads NFKLTASPSL. Residues 108–118 show a composition bias toward pro residues; the sequence is PSPPPPPPPST. Composition is skewed to low complexity over residues 119 to 134, 161 to 172, and 208 to 226; these read QPSTSTSTSPTPRTST, NGKKPNFFNNNN, and NNNNNNSSNNSNNSNNSNS. Residues 248–264 are compositionally biased toward polar residues; the sequence is FKSNNGSPRQSSGLRDY.

Belongs to the EDC family.

The protein resides in the cytoplasm. Its function is as follows. mRNA-binding protein which stimulates mRNA decapping. This is Enhancer of mRNA-decapping protein 1 (EDC1) from Candida albicans (strain SC5314 / ATCC MYA-2876) (Yeast).